A 286-amino-acid chain; its full sequence is ATP synthase gamma chain (286 aa).

Belongs to the ATPase gamma chain family. F-type ATPases have 2 components, CF(1) - the catalytic core - and CF(0) - the membrane proton channel. CF(1) has five subunits: alpha(3), beta(3), gamma(1), delta(1), epsilon(1). CF(0) has three main subunits: a, b and c.

Its subcellular location is the cell inner membrane. Its function is as follows. Produces ATP from ADP in the presence of a proton gradient across the membrane. The gamma chain is believed to be important in regulating ATPase activity and the flow of protons through the CF(0) complex. The chain is ATP synthase gamma chain from Pseudomonas putida (strain W619).